The following is a 344-amino-acid chain: Ketol-acid reductoisomerase (NADP(+)) (344 aa).

Positions 1-181 (MATMYYEQNI…GAARGGLLET (181 aa)) constitute a KARI N-terminal Rossmann domain. NADP(+)-binding positions include 25-28 (YGSQ), R48, S52, and 82-85 (DERQ). Residue H107 is part of the active site. G133 lines the NADP(+) pocket. The KARI C-terminal knotted domain occupies 182 to 327 (TFKEETETDL…AKLREMMPFI (146 aa)). Positions 190, 194, 226, and 230 each coordinate Mg(2+). S251 is a substrate binding site.

The protein belongs to the ketol-acid reductoisomerase family. It depends on Mg(2+) as a cofactor.

It carries out the reaction (2R)-2,3-dihydroxy-3-methylbutanoate + NADP(+) = (2S)-2-acetolactate + NADPH + H(+). It catalyses the reaction (2R,3R)-2,3-dihydroxy-3-methylpentanoate + NADP(+) = (S)-2-ethyl-2-hydroxy-3-oxobutanoate + NADPH + H(+). It functions in the pathway amino-acid biosynthesis; L-isoleucine biosynthesis; L-isoleucine from 2-oxobutanoate: step 2/4. The protein operates within amino-acid biosynthesis; L-valine biosynthesis; L-valine from pyruvate: step 2/4. In terms of biological role, involved in the biosynthesis of branched-chain amino acids (BCAA). Catalyzes an alkyl-migration followed by a ketol-acid reduction of (S)-2-acetolactate (S2AL) to yield (R)-2,3-dihydroxy-isovalerate. In the isomerase reaction, S2AL is rearranged via a Mg-dependent methyl migration to produce 3-hydroxy-3-methyl-2-ketobutyrate (HMKB). In the reductase reaction, this 2-ketoacid undergoes a metal-dependent reduction by NADPH to yield (R)-2,3-dihydroxy-isovalerate. The polypeptide is Ketol-acid reductoisomerase (NADP(+)) (Lysinibacillus sphaericus (strain C3-41)).